The sequence spans 606 residues: Probable potassium transport system protein Kup 2 (606 aa).

Helical transmembrane passes span 18-38 (GLVF…IMTL), 46-66 (VLGI…VEYA), 97-117 (VAFV…DGII), 140-160 (AQGV…IFQF), 169-189 (AFGP…IVSI), 204-224 (AVTF…EVIL), 247-267 (AWYF…AFIL), 286-306 (ILYI…SQAL), 339-359 (IYIG…MLIF), 368-388 (AYGL…TMIF), 395-415 (WKVP…TANF), and 418-438 (LPHG…IMII).

It belongs to the HAK/KUP transporter (TC 2.A.72) family.

The protein localises to the cell inner membrane. It carries out the reaction K(+)(in) + H(+)(in) = K(+)(out) + H(+)(out). Its function is as follows. Transport of potassium into the cell. Likely operates as a K(+):H(+) symporter. This chain is Probable potassium transport system protein Kup 2, found in Geobacter metallireducens (strain ATCC 53774 / DSM 7210 / GS-15).